A 513-amino-acid polypeptide reads, in one-letter code: Protein disulfide-isomerase 2 (513 aa).

Residues 1 to 20 form the signal peptide; the sequence is MNKFLALLFVLALFANIAFS. Thioredoxin domains are found at residues 21 to 147 and 355 to 486; these read CEGH…EELK and DVIG…DNAA. Active-site nucleophile residues include Cys70, Cys73, Cys406, and Cys409. 2 disulfides stabilise this stretch: Cys70–Cys73 and Cys406–Cys409. The interval 491 to 513 is disordered; that stretch reads LPSSQTDDNVESKKDSSAKHDEL. A compositionally biased stretch (basic and acidic residues) spans 500–513; sequence VESKKDSSAKHDEL. A Prevents secretion from ER motif is present at residues 510-513; it reads HDEL.

It belongs to the protein disulfide isomerase family.

Its subcellular location is the endoplasmic reticulum lumen. The enzyme catalyses Catalyzes the rearrangement of -S-S- bonds in proteins.. In terms of biological role, participates in the folding of proteins containing disulfide bonds, may be involved in glycosylation, prolyl hydroxylation and triglyceride transfer. This chain is Protein disulfide-isomerase 2 (pdi2), found in Dictyostelium discoideum (Social amoeba).